The chain runs to 526 residues: Alpha-1,3-mannosyl-glycoprotein 4-beta-N-acetylglucosaminyltransferase A (526 aa).

The Cytoplasmic segment spans residues 1 to 6; sequence MRLRNG. A helical; Signal-anchor for type II membrane protein transmembrane segment spans residues 7–27; the sequence is TVATALVFVTSFLTLSWYTTW. Residues 28–63 are a coiled coil; the sequence is QNGKEKLIAYQREFLALKERLRVAEHRISQRSSELN. Over 28-526 the chain is Lumenal; the sequence is QNGKEKLIAY…NEIHIKKVTS (499 aa). N-linked (GlcNAc...) asparagine glycosylation occurs at asparagine 449. Residue serine 465 is modified to Phosphoserine.

This sequence belongs to the glycosyltransferase 54 family. The cofactor is a divalent metal cation. In terms of processing, N-glycosylated.

It localises to the golgi apparatus membrane. The protein resides in the secreted. The enzyme catalyses N(4)-{beta-D-GlcNAc-(1-&gt;2)-alpha-D-Man-(1-&gt;3)-[beta-D-GlcNAc-(1-&gt;2)-alpha-D-Man-(1-&gt;6)]-beta-D-Man-(1-&gt;4)-beta-D-GlcNAc-(1-&gt;4)-beta-D-GlcNAc}-L-asparaginyl-[protein] + UDP-N-acetyl-alpha-D-glucosamine = N(4)-{beta-D-GlcNAc-(1-&gt;2)-[beta-D-GlcNAc-(1-&gt;4)]-alpha-D-Man-(1-&gt;3)-[beta-D-GlcNAc-(1-&gt;2)-alpha-D-Man-(1-&gt;6)]-beta-D-Man-(1-&gt;4)-beta-D-GlcNAc-(1-&gt;4)-beta-D-GlcNAc}-L-asparaginyl-[protein] + UDP + H(+). The catalysed reaction is an N(4)-{beta-D-GlcNAc-(1-&gt;2)-alpha-D-Man-(1-&gt;3)-[alpha-D-Man-(1-&gt;6)]-beta-D-Man-(1-&gt;4)-beta-D-GlcNAc-(1-&gt;4)-beta-D-GlcNAc}-L-asparaginyl-[protein] + UDP-N-acetyl-alpha-D-glucosamine = an N(4)-{beta-D-GlcNAc-(1-&gt;2)-[beta-D-GlcNAc-(1-&gt;4)]-alpha-D-Man-(1-&gt;3)-[alpha-D-Man-(1-&gt;6)]-beta-D-Man-(1-&gt;4)-beta-D-GlcNAc-(1-&gt;4)-beta-D-GlcNAc}-L-asparaginyl-[protein] + UDP + H(+). It carries out the reaction an N(4)-{beta-D-GlcNAc-(1-&gt;2)-alpha-D-Man-(1-&gt;3)-[beta-D-GlcNAc-(1-&gt;2)-[beta-D-GlcNAc-(1-&gt;6)]-alpha-D-Man-(1-&gt;6)]-beta-D-Man-(1-&gt;4)-beta-D-GlcNAc-(1-&gt;4)-beta-D-GlcNAc}-L-asparaginyl-[protein] + UDP-N-acetyl-alpha-D-glucosamine = an N(4)-{beta-D-GlcNAc-(1-&gt;2)-[beta-D-GlcNAc-(1-&gt;4)]-alpha-D-Man-(1-&gt;3)-[beta-D-GlcNAc-(1-&gt;2)-[beta-D-GlcNAc-(1-&gt;6)]-alpha-D-Man-(1-&gt;6)]-beta-D-Man-(1-&gt;4)-beta-D-GlcNAc-(1-&gt;4)-beta-D-GlcNAc}-L-asparaginyl-[protein] + UDP + H(+). It catalyses the reaction an N(4)-{beta-D-GlcNAc-(1-&gt;2)-alpha-D-Man-(1-&gt;3)-[beta-D-GlcNAc-(1-&gt;2)-alpha-D-Man-(1-&gt;6)]-beta-D-Man-(1-&gt;4)-beta-D-GlcNAc-(1-&gt;4)-[alpha-L-Fuc-(1-&gt;6)]-beta-D-GlcNAc}-L-asparaginyl-[protein] + UDP-N-acetyl-alpha-D-glucosamine = N(4)-{beta-D-GlcNAc-(1-&gt;2)-[beta-D-GlcNAc-(1-&gt;4)]-alpha-D-Man-(1-&gt;3)-[beta-D-GlcNAc-(1-&gt;2)-alpha-D-Man-(1-&gt;6)]-beta-D-Man-(1-&gt;4)-beta-D-GlcNAc-(1-&gt;4)-[alpha-L-Fuc-(1-&gt;6)]-beta-D-GlcNAc}-asparaginyl-[protein] + UDP + H(+). The enzyme catalyses an N(4)-{beta-D-GlcNAc-(1-&gt;2)-alpha-D-Man-(1-&gt;3)-[beta-D-Gal-(1-&gt;4)-beta-D-GlcNAc-(1-&gt;2)-alpha-D-Man-(1-&gt;6)]-beta-D-Man-(1-&gt;4)-beta-D-GlcNAc-(1-&gt;4)-beta-D-GlcNAc}-L-asparaginyl-[protein] + UDP-N-acetyl-alpha-D-glucosamine = an N(4)-{beta-D-GlcNAc-(1-&gt;2)-[beta-D-GlcNAc-(1-&gt;4)]-alpha-D-Man-(1-&gt;3)-[beta-D-Gal-(1-&gt;4)-beta-D-GlcNAc-(1-&gt;2)-alpha-D-Man-(1-&gt;6)]-beta-D-Man-(1-&gt;4)-beta-D-GlcNAc-(1-&gt;4)-beta-D-GlcNAc}-L-asparaginyl-[protein] + UDP + H(+). The catalysed reaction is N(4)-{beta-D-GlcNAc-(1-&gt;2)-alpha-D-Man-(1-&gt;3)-[alpha-D-Man-(1-&gt;3)-{alpha-D-Man-(1-&gt;6)}-alpha-D-Man-(1-&gt;6)]-beta-D-Man-(1-&gt;4)-beta-D-GlcNAc-(1-&gt;4)-beta-D-GlcNAc}-asparaginyl-[protein] + UDP-N-acetyl-alpha-D-glucosamine = N(4)-{beta-D-GlcNAc-(1-&gt;2)-[beta-D-GlcNAc-(1-&gt;4)]-alpha-D-Man-(1-&gt;3)-[alpha-D-Man-(1-&gt;3)-{alpha-D-Man-(1-&gt;6)}-alpha-D-Man-(1-&gt;6)]-beta-D-Man-(1-&gt;4)-beta-D-GlcNAc-(1-&gt;4)-beta-D-GlcNAc}-asparaginyl-[protein] + UDP + H(+). It carries out the reaction N(4)-{beta-D-GlcNAc-(1-&gt;2)-alpha-D-Man-(1-&gt;3)-beta-D-Man-(1-&gt;4)-beta-D-GlcNAc-(1-&gt;4)-beta-D-GlcNAc}-asparaginyl-[protein] + UDP-N-acetyl-alpha-D-glucosamine = N(4)-{beta-D-GlcNAc-(1-&gt;2)-[beta-D-GlcNAc-(1-&gt;4)]-alpha-D-Man-(1-&gt;3)-beta-D-Man-(1-&gt;4)-beta-D-GlcNAc-(1-&gt;4)-beta-D-GlcNAc}-asparaginyl-[protein] + UDP + H(+). The protein operates within protein modification; protein glycosylation. Its activity is regulated as follows. Inhibited by UDP. Functionally, glycosyltransferase that catalyze the transfer of GlcNAc from UDP-GlcNAc to the GlcNAcbeta1-2Manalpha1-3 arm of the core structure of N-linked glycans through a beta1-4 linkage and participates in the production of tri- and tetra-antennary N-linked sugar chains. Involved in glucose transport by mediating SLC2A2/GLUT2 glycosylation, thereby controlling cell-surface expression of SLC2A2 in pancreatic beta cells. This is Alpha-1,3-mannosyl-glycoprotein 4-beta-N-acetylglucosaminyltransferase A from Rattus norvegicus (Rat).